Consider the following 161-residue polypeptide: Nucleotide-binding protein Pnuc_0290 (161 aa).

This sequence belongs to the YajQ family.

Functionally, nucleotide-binding protein. The sequence is that of Nucleotide-binding protein Pnuc_0290 from Polynucleobacter asymbioticus (strain DSM 18221 / CIP 109841 / QLW-P1DMWA-1) (Polynucleobacter necessarius subsp. asymbioticus).